The following is a 342-amino-acid chain: Phenylalanine--tRNA ligase alpha subunit (342 aa).

E255 serves as a coordination point for Mg(2+).

Belongs to the class-II aminoacyl-tRNA synthetase family. Phe-tRNA synthetase alpha subunit type 1 subfamily. As to quaternary structure, tetramer of two alpha and two beta subunits. Mg(2+) is required as a cofactor.

The protein localises to the cytoplasm. The catalysed reaction is tRNA(Phe) + L-phenylalanine + ATP = L-phenylalanyl-tRNA(Phe) + AMP + diphosphate + H(+). This chain is Phenylalanine--tRNA ligase alpha subunit, found in Pelodictyon phaeoclathratiforme (strain DSM 5477 / BU-1).